We begin with the raw amino-acid sequence, 551 residues long: Dihydroxy-acid dehydratase (551 aa).

Asp78 lines the Mg(2+) pocket. Cys119 lines the [2Fe-2S] cluster pocket. Mg(2+) is bound by residues Asp120 and Lys121. Residue Lys121 is modified to N6-carboxylysine. Cys191 is a [2Fe-2S] cluster binding site. Glu441 is a Mg(2+) binding site. Catalysis depends on Ser467, which acts as the Proton acceptor.

Belongs to the IlvD/Edd family. In terms of assembly, homodimer. Requires [2Fe-2S] cluster as cofactor. It depends on Mg(2+) as a cofactor.

The enzyme catalyses (2R)-2,3-dihydroxy-3-methylbutanoate = 3-methyl-2-oxobutanoate + H2O. It carries out the reaction (2R,3R)-2,3-dihydroxy-3-methylpentanoate = (S)-3-methyl-2-oxopentanoate + H2O. Its pathway is amino-acid biosynthesis; L-isoleucine biosynthesis; L-isoleucine from 2-oxobutanoate: step 3/4. The protein operates within amino-acid biosynthesis; L-valine biosynthesis; L-valine from pyruvate: step 3/4. Functions in the biosynthesis of branched-chain amino acids. Catalyzes the dehydration of (2R,3R)-2,3-dihydroxy-3-methylpentanoate (2,3-dihydroxy-3-methylvalerate) into 2-oxo-3-methylpentanoate (2-oxo-3-methylvalerate) and of (2R)-2,3-dihydroxy-3-methylbutanoate (2,3-dihydroxyisovalerate) into 2-oxo-3-methylbutanoate (2-oxoisovalerate), the penultimate precursor to L-isoleucine and L-valine, respectively. In Pyrococcus abyssi (strain GE5 / Orsay), this protein is Dihydroxy-acid dehydratase.